The chain runs to 693 residues: Elongation factor G (693 aa).

A tr-type G domain is found at lysine 8 to leucine 282. GTP-binding positions include alanine 17–threonine 24, aspartate 81–histidine 85, and asparagine 135–aspartate 138.

The protein belongs to the TRAFAC class translation factor GTPase superfamily. Classic translation factor GTPase family. EF-G/EF-2 subfamily.

It localises to the cytoplasm. Catalyzes the GTP-dependent ribosomal translocation step during translation elongation. During this step, the ribosome changes from the pre-translocational (PRE) to the post-translocational (POST) state as the newly formed A-site-bound peptidyl-tRNA and P-site-bound deacylated tRNA move to the P and E sites, respectively. Catalyzes the coordinated movement of the two tRNA molecules, the mRNA and conformational changes in the ribosome. The chain is Elongation factor G from Staphylococcus intermedius.